The chain runs to 536 residues: Putative UDP-glucuronosyltransferase ugt-47 (536 aa).

The signal sequence occupies residues Met1–Ala21. Residues Asn52 and Asn308 are each glycosylated (N-linked (GlcNAc...) asparagine). Residues Ile497–Phe517 form a helical membrane-spanning segment.

This sequence belongs to the UDP-glycosyltransferase family.

The protein resides in the membrane. It carries out the reaction glucuronate acceptor + UDP-alpha-D-glucuronate = acceptor beta-D-glucuronoside + UDP + H(+). This is Putative UDP-glucuronosyltransferase ugt-47 (ugt-47) from Caenorhabditis elegans.